We begin with the raw amino-acid sequence, 60 residues long: Large ribosomal subunit protein uL30 (60 aa).

This sequence belongs to the universal ribosomal protein uL30 family. As to quaternary structure, part of the 50S ribosomal subunit.

The protein is Large ribosomal subunit protein uL30 of Streptococcus gordonii (strain Challis / ATCC 35105 / BCRC 15272 / CH1 / DL1 / V288).